The following is a 790-amino-acid chain: Eukaryotic translation initiation factor 3 subunit C (790 aa).

A disordered region spans residues 1 to 62 (MSRFFVSGYN…DGRPSGPAYF (62 aa)). The span at 14 to 53 (SSEEEDLLSSEEELLTSSGEENEDSDFFNDDDESSSDEED) shows a compositional bias: acidic residues. Positions 556–728 (FHQHINLELL…IVFTTDSQRS (173 aa)) constitute a PCI domain. A disordered region spans residues 748–790 (NEKTSSNGYAKKNQSQTQPQAQSKEVEENKFRYANVNTNTDEF). Residues 751–770 (TSSNGYAKKNQSQTQPQAQS) are compositionally biased toward polar residues.

This sequence belongs to the eIF-3 subunit C family. As to quaternary structure, component of the eukaryotic translation initiation factor 3 (eIF-3) complex.

It localises to the cytoplasm. Component of the eukaryotic translation initiation factor 3 (eIF-3) complex, which is involved in protein synthesis of a specialized repertoire of mRNAs and, together with other initiation factors, stimulates binding of mRNA and methionyl-tRNAi to the 40S ribosome. The eIF-3 complex specifically targets and initiates translation of a subset of mRNAs involved in cell proliferation. The polypeptide is Eukaryotic translation initiation factor 3 subunit C (Lodderomyces elongisporus (strain ATCC 11503 / CBS 2605 / JCM 1781 / NBRC 1676 / NRRL YB-4239) (Yeast)).